Here is a 487-residue protein sequence, read N- to C-terminus: NADH-quinone oxidoreductase subunit N (487 aa).

A run of 14 helical transmembrane segments spans residues 16–36, 45–65, 79–99, 111–131, 133–153, 168–188, 212–232, 257–276, 281–298, 306–326, 333–353, 378–398, 413–435, and 457–477; these read VIMPEVILSVLGMALLLVNVF, LAWLSLIGIVGAGFAAVTGWG, NFAIFFKIIFLLAAGLAVLIS, GELYPIILFTTVGMMLMAAAT, LMTIFLGLELMSISLYVLAGF, FLLGAFSTGFLLYGMALIYGV, LLIGMFLMLTGFLFKIAAAPF, AAGFAAMLRLLLVAFPAMIA, LLWILAVLTMTVGNFTAL, MLAYSSIAHAGYCLVGFASGT, ILFYMLSYTFMNIGAFAVIVL, ALAMTVFMFSLAGMPPTAGFI, IWLAIIGVLNSAASVYYYLRVIV, and LALVVSAAGSLIPGIIPSMIL.

It belongs to the complex I subunit 2 family. NDH-1 is composed of 14 different subunits. Subunits NuoA, H, J, K, L, M, N constitute the membrane sector of the complex.

It is found in the cell inner membrane. The enzyme catalyses a quinone + NADH + 5 H(+)(in) = a quinol + NAD(+) + 4 H(+)(out). Functionally, NDH-1 shuttles electrons from NADH, via FMN and iron-sulfur (Fe-S) centers, to quinones in the respiratory chain. The immediate electron acceptor for the enzyme in this species is believed to be ubiquinone. Couples the redox reaction to proton translocation (for every two electrons transferred, four hydrogen ions are translocated across the cytoplasmic membrane), and thus conserves the redox energy in a proton gradient. The sequence is that of NADH-quinone oxidoreductase subunit N from Trichlorobacter lovleyi (strain ATCC BAA-1151 / DSM 17278 / SZ) (Geobacter lovleyi).